We begin with the raw amino-acid sequence, 495 residues long: Probable biotin-dependent acyl-coenzyme A carboxylase beta3 subunit (495 aa).

A CoA carboxyltransferase N-terminal domain is found at 1 to 236; sequence MSRITTDQLR…PLPAPQTPAP (236 aa). In terms of domain architecture, CoA carboxyltransferase C-terminal spans 242–470; that stretch reads TWDSVVASRR…SNAIAAEVHA (229 aa).

It belongs to the AccD/PCCB family. In terms of assembly, the biotin-dependent acyl-CoA carboxylase complex is composed of an AccA protein, which contains the biotin carboxylase (BC) and biotin carboxyl carrier protein (BCCP) domains, and an AccD protein, which contains the carboxyl transferase (CT) domain.

Its function is as follows. Component of a biotin-dependent acyl-CoA carboxylase complex. This subunit transfers the CO2 from carboxybiotin to the CoA ester substrate. This Mycobacterium bovis (strain ATCC BAA-935 / AF2122/97) protein is Probable biotin-dependent acyl-coenzyme A carboxylase beta3 subunit (accD3).